Reading from the N-terminus, the 828-residue chain is Beta-galactosidase (828 aa).

Residues 1–20 (MKMKQFNLLSLFLILITSFG) form the signal peptide. 2 N-linked (GlcNAc...) asparagine glycosylation sites follow: Asn-23 and Asn-153. Glu-183 (proton donor) is an active-site residue. Residue Glu-252 is the Nucleophile of the active site. 7 N-linked (GlcNAc...) asparagine glycosylation sites follow: Asn-253, Asn-350, Asn-379, Asn-492, Asn-667, Asn-799, and Asn-803. Residues 742-828 (AHEHNKVELS…PKRLFVEVEC (87 aa)) enclose the SUEL-type lectin domain.

It belongs to the glycosyl hydrolase 35 family.

It localises to the secreted. The protein localises to the extracellular space. It is found in the apoplast. The enzyme catalyses Hydrolysis of terminal non-reducing beta-D-galactose residues in beta-D-galactosides.. The protein is Beta-galactosidase of Brassica oleracea (Wild cabbage).